The sequence spans 582 residues: BTB/POZ domain and ankyrin repeat-containing protein NPR1 (582 aa).

Polar residues predominate over residues 1 to 18 (MEPPTSHVTNAFSDSDSA). A disordered region spans residues 1–25 (MEPPTSHVTNAFSDSDSASVEEGGA). The region spanning 55–140 (ADARIAVPGG…VLDYLYSGRV (86 aa)) is the BTB domain. A C2HC NPR-type zinc finger spans residues 147–161 (ACLCVDEDCAHVGCH). Zn(2+) contacts are provided by Cys-150, Cys-155, His-157, and Cys-160. ANK repeat units follow at residues 229-258 (RSNL…SLGL), 269-299 (KHVR…NLDD), 301-328 (FALH…DVNH), and 332-361 (RGYT…RPAD). A salicylic acid-binding core (SBC) region spans residues 391 to 526 (PSPKDRLCIE…VLDKIMDDET (136 aa)). Arg-436 contributes to the salicylate binding site. Residues 551–582 (QKAFHEDKEENDRSGLSSSSSSTSIGAIRPRR) form a disordered region. The span at 553–563 (AFHEDKEENDR) shows a compositional bias: basic and acidic residues. Positions 564–574 (SGLSSSSSSTS) are enriched in low complexity.

This sequence belongs to the plant 'ANKYRIN-BTB/POZ' family. 'NPR1-like' subfamily. As to quaternary structure, oligomer in an uninduced state; disulfide-linked. Forms activated monomer upon changes in cellular redox potential. Interacts with TGA2.1, TGA2.2, TGA2.3, LG2, TGAL1 and TGAL4. Interacts with NRR, RH1, RH2 and RH3.

It localises to the cytoplasm. It is found in the nucleus. The protein resides in the nuclear body. It participates in protein modification; protein ubiquitination. Functionally, salicylic acid (SA)-binding substrate-specific adapter of an E3 ubiquitin-protein ligase complex (CUL3-RBX1-BTB) which mediates the ubiquitination and subsequent proteasomal degradation of target proteins. Transcription cofactor that represses gene expression in the absence of salicylic acid (SA), when attached to negative cis-elements (W-box) with WRKY transcription factors, but stimulates gene expression upon activation by SA, when sumoylated and attached to positive cis-elements (as-1) with TGA transcription factors, thus confering immunity through a series of gene regulations ending in a significant increase in antimicrobial and defense genes expression. Key positive factor of disease resistance. Plays an essential role in benzothiadiazole (BTH)-induced resistance to the blast fungus disease caused by Magnaporthe oryzae. Involved in defense response against the bacterial blight disease caused by Xanthomonas oryzae pv. oryzae (Xoo). Over-expression of NPR1/NH1 confers disease resistance to Xoo, but also enhances herbivore susceptibility. Functions as a transcriptional coactivator of TGA2.1 and LG2 in vitro. Involved in defense response against herbivore. Plants silencing NPR1/NH1 have increased herbivore-induced trypsin proteinase inhibitors and volatiles, which reduces the performance of the striped stem borer (SSB) Chilo suppressalis. The sequence is that of BTB/POZ domain and ankyrin repeat-containing protein NPR1 from Oryza sativa subsp. japonica (Rice).